The primary structure comprises 88 residues: Putative membrane protein insertion efficiency factor (88 aa).

Residues 68-88 (VPPPNSDTRARGEADARSHRL) are disordered. Over residues 75 to 88 (TRARGEADARSHRL) the composition is skewed to basic and acidic residues.

This sequence belongs to the UPF0161 family.

The protein resides in the cell inner membrane. Functionally, could be involved in insertion of integral membrane proteins into the membrane. The polypeptide is Putative membrane protein insertion efficiency factor (Burkholderia cenocepacia (strain ATCC BAA-245 / DSM 16553 / LMG 16656 / NCTC 13227 / J2315 / CF5610) (Burkholderia cepacia (strain J2315))).